The primary structure comprises 379 residues: Cytochrome b (379 aa).

4 helical membrane-spanning segments follow: residues 33–53 (FGSLLGMCLGLQILTGLFLAM), 77–98 (WLIRYMHANGASMFFIFLYFHI), 113–133 (WNMGVLLLLTTMATAFMGYVL), and 178–198 (FFAFHFILPFIITAMVMIHLL). Residues H83 and H97 each coordinate heme b. Heme b-binding residues include H182 and H196. Residue H201 coordinates a ubiquinone. 4 consecutive transmembrane segments (helical) span residues 226–246 (IKDILGALFMIITLMSLVMFS), 288–308 (LGGVLALASSILILMLFPILH), 320–340 (LSQCLMWMLVTNLLILTWIGG), and 347–367 (FITIGQMASMTYFFTTLILMP).

The protein belongs to the cytochrome b family. In terms of assembly, the cytochrome bc1 complex contains 11 subunits: 3 respiratory subunits (MT-CYB, CYC1 and UQCRFS1), 2 core proteins (UQCRC1 and UQCRC2) and 6 low-molecular weight proteins (UQCRH/QCR6, UQCRB/QCR7, UQCRQ/QCR8, UQCR10/QCR9, UQCR11/QCR10 and a cleavage product of UQCRFS1). This cytochrome bc1 complex then forms a dimer. The cofactor is heme b.

It localises to the mitochondrion inner membrane. Component of the ubiquinol-cytochrome c reductase complex (complex III or cytochrome b-c1 complex) that is part of the mitochondrial respiratory chain. The b-c1 complex mediates electron transfer from ubiquinol to cytochrome c. Contributes to the generation of a proton gradient across the mitochondrial membrane that is then used for ATP synthesis. The protein is Cytochrome b (MT-CYB) of Ctenomys leucodon (White-toothed tuco-tuco).